We begin with the raw amino-acid sequence, 613 residues long: Zinc finger CCCH domain-containing protein 59 (613 aa).

The tract at residues Asn-275–Arg-296 is disordered. C3H1-type zinc fingers lie at residues Ala-318–Glu-346 and His-350–Ser-378.

The polypeptide is Zinc finger CCCH domain-containing protein 59 (Oryza sativa subsp. japonica (Rice)).